Reading from the N-terminus, the 480-residue chain is Gasdermin-C2 (480 aa).

The triggers pyroptosis stretch occupies residues 1 to 226 (MGYSFDRASK…TCVILPSATK (226 aa)).

The protein belongs to the gasdermin family. In terms of assembly, homooligomer; homooligomeric ring-shaped pore complex containing 27-28 subunits when inserted in the membrane. Post-translationally, cleavage by CASP8 relieves autoinhibition by releasing the N-terminal moiety (Gasdermin-C2, N-terminal) that initiates pyroptosis. Palmitoylated.

The protein localises to the cytoplasm. Its subcellular location is the cytosol. The protein resides in the cell membrane. With respect to regulation, the full-length protein before cleavage is inactive: intramolecular interactions between N- and C-terminal domains mediate autoinhibition in the absence of activation signal. The intrinsic pyroptosis-inducing activity is carried by the released N-terminal moiety (Gasdermin-C2, N-terminal) following cleavage by caspase CASP8 in response to type-2 immunity following worm infection. This form constitutes the precursor of the pore-forming protein: upon cleavage, the released N-terminal moiety (Gasdermin-C2, N-terminal) binds to membranes and forms pores, triggering pyroptosis. In terms of biological role, pore-forming protein that causes membrane permeabilization and pyroptosis in response to type-2 immunity. Produced by the cleavage of gasdermin-C2 in response to type-2 immunity following worm infection. After cleavage, moves to the plasma membrane where it strongly binds to membrane inner leaflet lipids. Homooligomerizes within the membrane and forms pores of 10-15 nanometers (nm) of inner diameter, triggering pyroptosis and lytic cell death in enterocytes. The sequence is that of Gasdermin-C2 from Mus musculus (Mouse).